The sequence spans 347 residues: Trace amine-associated receptor 4 (347 aa).

Over 1-37 (MNTPDPWSSPEVQFCFAAANSSCPRKARPALVVCAMY) the chain is Extracellular. An N-linked (GlcNAc...) asparagine glycan is attached at asparagine 20. 2 disulfide bridges follow: cysteine 23–cysteine 187 and cysteine 106–cysteine 191. Residues 38 to 58 (LIMIGAIVMTMLGNMAVIISI) traverse the membrane as a helical segment. The Cytoplasmic portion of the chain corresponds to 59–69 (AHFKQLHSPTN). The helical transmembrane segment at 70–90 (FLILSMATTDFLLSCVVMPFS) threads the bilayer. At 91–110 (MIRSIESCWYFGDLFCKVHS) the chain is on the extracellular side. The helical transmembrane segment at 111-129 (CCDIMLCTTSIFHLCFISV) threads the bilayer. The Cytoplasmic segment spans residues 130–149 (DRHYAVCDPLHYVTQITTRV). Residues 150-170 (VGVFLLISWSVPIFFAFGLVF) traverse the membrane as a helical segment. Residues 171–197 (SELNLIGAEDFVAAIDCTGLCVLIFNK) are Extracellular-facing. The interval 175 to 188 (LIGAEDFVAAIDCT) is extracellular Loop 2 (ECL2). Residues 198-218 (LWGVLASFIAFFLPGTVMVGI) traverse the membrane as a helical segment. Residues 219–260 (YIHIFTVAQKHARQIGTGPRTKQALSESKMKATSKKESKATK) lie on the Cytoplasmic side of the membrane. Residues 261–281 (TLSIVMGVFVLCWLPFFVLTI) form a helical membrane-spanning segment. Topologically, residues 282-296 (TDPFIDFTTPEDLYN) are extracellular. A helical membrane pass occupies residues 297–317 (VFLWLGYFNSTFNPIIYGMFY). Residues 318–347 (PWFRKALRMIVTGTIFRSDSSTSSLHPAHP) are Cytoplasmic-facing.

This sequence belongs to the G-protein coupled receptor 1 family. Specifically expressed in neurons of the olfactory epithelium, to discrete glomeruli predominantly localized to a confined bulb region. Present in the dorsal area of the main olfactory epithelium.

It localises to the cell membrane. Olfactory receptor specific for 2-phenylethylamine, a trace amine present at high concentration in the urine of carnivore species, playing a key role in fear and avoidance responses. 2-phenylethylamine acts as a kairomone in the chemical detection of carnivore odor and triggers fear in mice. This receptor is probably mediated by the G(s)-class of G-proteins which activate adenylate cyclase. This chain is Trace amine-associated receptor 4, found in Mus musculus (Mouse).